Consider the following 367-residue polypeptide: Probable outer membrane usher protein LpfC (367 aa).

Positions 1-30 (MSRKTVSRTFSSFSISVVAVAVASTFSAHA) are cleaved as a signal peptide.

This sequence belongs to the fimbrial export usher family.

It localises to the cell outer membrane. Part of the lpfABCC'DE fimbrial operon. LP fimbriae may participate in the interaction with eukaryotic cells by assisting in microcolony formation. Could be involved in the export and assembly of the fimbrial subunits across the outer membrane. This is Probable outer membrane usher protein LpfC (lpfC) from Escherichia coli O157:H7.